Here is a 121-residue protein sequence, read N- to C-terminus: ORF8 protein (121 aa).

A signal peptide spans 1-15 (MKFLVFLGIITTVAA). Residues 19–121 (ECSLQSCTQH…HDVRVVLDFI (103 aa)) enclose the SARS ORF8 Ig-like domain. 3 disulfide bridges follow: C25/C90, C37/C102, and C61/C83. N78 is a glycosylation site (N-linked (GlcNAc...) (complex) asparagine; by host).

Homodimer. Interacts with host IL17RA. Interacts with host IL17RC. Interacts with host MHC-I. Post-translationally, glycosylated by the host when secreted via the conventional pathway. The glycosylated form cannot bind IL17A and would not participate in the cytokine storm.

It localises to the secreted. Plays a role in modulating the host immune response. May act as a secreted virokine by mimicking interleukin-17A (IL17A), and thereby binding to the IL17RA receptor, leading to activation of the IL17 pathway and increased secretion of pro-inflammatory factors. Contributes to the cytokine storm during SARS-CoV-2 infection when secreted by unconventional pathway. May act by down-regulating major histocompability complex class I (MHC-I) at cell surface. May inhibit expression of some members of the IFN-stimulated gene (ISG) family including hosts IGF2BP1/ZBP1, MX1 and MX2, and DHX58. This is ORF8 protein from Severe acute respiratory syndrome coronavirus 2 (2019-nCoV).